The sequence spans 341 residues: Paired box protein Pax-9 (341 aa).

A DNA-binding region (paired) is located at residues 4-130; that stretch reads AFGEVNQLGG…SSISRILRNK (127 aa). The segment at 7–63 is PAI subdomain; the sequence is EVNQLGGVFVNGRPLPNAIRLRIVELAQLGIRPCDISRQLRVSHGCVSKILARYNET. Residues 82–130 are RED subdomain; sequence TVVKHIRTYKQRDPGIFAWEIRDRLLADGVCDKYNVPSVSSISRILRNK. The segment at 168–189 is interaction with KDM5B; it reads AAAAKVPTPPGVPAIPGSVAMP.

In terms of assembly, interacts with KDM5B.

It localises to the nucleus. Its function is as follows. Transcription factor required for normal development of thymus, parathyroid glands, ultimobranchial bodies, teeth, skeletal elements of skull and larynx as well as distal limbs. The chain is Paired box protein Pax-9 (PAX9) from Callithrix jacchus (White-tufted-ear marmoset).